We begin with the raw amino-acid sequence, 363 residues long: Protein RecA (363 aa).

Residue 79-86 (GPESSGKT) participates in ATP binding.

Belongs to the RecA family.

The protein resides in the cytoplasm. Can catalyze the hydrolysis of ATP in the presence of single-stranded DNA, the ATP-dependent uptake of single-stranded DNA by duplex DNA, and the ATP-dependent hybridization of homologous single-stranded DNAs. It interacts with LexA causing its activation and leading to its autocatalytic cleavage. The protein is Protein RecA of Methylobacterium radiotolerans (strain ATCC 27329 / DSM 1819 / JCM 2831 / NBRC 15690 / NCIMB 10815 / 0-1).